The chain runs to 476 residues: Aspartyl/glutamyl-tRNA(Asn/Gln) amidotransferase subunit B (476 aa).

It belongs to the GatB/GatE family. GatB subfamily. As to quaternary structure, heterotrimer of A, B and C subunits.

The catalysed reaction is L-glutamyl-tRNA(Gln) + L-glutamine + ATP + H2O = L-glutaminyl-tRNA(Gln) + L-glutamate + ADP + phosphate + H(+). It catalyses the reaction L-aspartyl-tRNA(Asn) + L-glutamine + ATP + H2O = L-asparaginyl-tRNA(Asn) + L-glutamate + ADP + phosphate + 2 H(+). Allows the formation of correctly charged Asn-tRNA(Asn) or Gln-tRNA(Gln) through the transamidation of misacylated Asp-tRNA(Asn) or Glu-tRNA(Gln) in organisms which lack either or both of asparaginyl-tRNA or glutaminyl-tRNA synthetases. The reaction takes place in the presence of glutamine and ATP through an activated phospho-Asp-tRNA(Asn) or phospho-Glu-tRNA(Gln). The chain is Aspartyl/glutamyl-tRNA(Asn/Gln) amidotransferase subunit B from Nitratidesulfovibrio vulgaris (strain ATCC 29579 / DSM 644 / CCUG 34227 / NCIMB 8303 / VKM B-1760 / Hildenborough) (Desulfovibrio vulgaris).